Here is a 143-residue protein sequence, read N- to C-terminus: Sporulation-specific protein 73 (143 aa).

The protein belongs to the SPO73 family. Interacts with SPO71.

The protein localises to the cytoplasm. Its subcellular location is the prospore membrane. In terms of biological role, required for spore wall assembly and ascus formation. Involved in the formation and elongation of prospore membranes. The protein is Sporulation-specific protein 73 of Saccharomyces cerevisiae (strain ATCC 204508 / S288c) (Baker's yeast).